The sequence spans 366 residues: Chorismate synthase (366 aa).

NADP(+) contacts are provided by arginine 48 and arginine 54. FMN-binding positions include 125 to 127 (RSS), 237 to 238 (NA), glycine 277, 292 to 296 (KPTSS), and arginine 318.

The protein belongs to the chorismate synthase family. In terms of assembly, homotetramer. FMNH2 serves as cofactor.

It carries out the reaction 5-O-(1-carboxyvinyl)-3-phosphoshikimate = chorismate + phosphate. It functions in the pathway metabolic intermediate biosynthesis; chorismate biosynthesis; chorismate from D-erythrose 4-phosphate and phosphoenolpyruvate: step 7/7. Functionally, catalyzes the anti-1,4-elimination of the C-3 phosphate and the C-6 proR hydrogen from 5-enolpyruvylshikimate-3-phosphate (EPSP) to yield chorismate, which is the branch point compound that serves as the starting substrate for the three terminal pathways of aromatic amino acid biosynthesis. This reaction introduces a second double bond into the aromatic ring system. The polypeptide is Chorismate synthase (Acidovorax sp. (strain JS42)).